Here is a 370-residue protein sequence, read N- to C-terminus: Anhydro-N-acetylmuramic acid kinase (370 aa).

12–19 (GTSLDGID) lines the ATP pocket.

The protein belongs to the anhydro-N-acetylmuramic acid kinase family.

It carries out the reaction 1,6-anhydro-N-acetyl-beta-muramate + ATP + H2O = N-acetyl-D-muramate 6-phosphate + ADP + H(+). It participates in amino-sugar metabolism; 1,6-anhydro-N-acetylmuramate degradation. The protein operates within cell wall biogenesis; peptidoglycan recycling. Functionally, catalyzes the specific phosphorylation of 1,6-anhydro-N-acetylmuramic acid (anhMurNAc) with the simultaneous cleavage of the 1,6-anhydro ring, generating MurNAc-6-P. Is required for the utilization of anhMurNAc either imported from the medium or derived from its own cell wall murein, and thus plays a role in cell wall recycling. The polypeptide is Anhydro-N-acetylmuramic acid kinase (Yersinia enterocolitica serotype O:8 / biotype 1B (strain NCTC 13174 / 8081)).